A 227-amino-acid chain; its full sequence is 6-phosphogluconolactonase (227 aa).

Belongs to the glucosamine/galactosamine-6-phosphate isomerase family. 6-phosphogluconolactonase subfamily.

The catalysed reaction is 6-phospho-D-glucono-1,5-lactone + H2O = 6-phospho-D-gluconate + H(+). It participates in carbohydrate degradation; pentose phosphate pathway; D-ribulose 5-phosphate from D-glucose 6-phosphate (oxidative stage): step 2/3. Hydrolysis of 6-phosphogluconolactone to 6-phosphogluconate. This is 6-phosphogluconolactonase (pgl) from Helicobacter pylori (strain ATCC 700392 / 26695) (Campylobacter pylori).